The chain runs to 277 residues: 2-dehydro-3-deoxyphosphooctonate aldolase (277 aa).

This sequence belongs to the KdsA family.

It is found in the cytoplasm. The catalysed reaction is D-arabinose 5-phosphate + phosphoenolpyruvate + H2O = 3-deoxy-alpha-D-manno-2-octulosonate-8-phosphate + phosphate. Its pathway is carbohydrate biosynthesis; 3-deoxy-D-manno-octulosonate biosynthesis; 3-deoxy-D-manno-octulosonate from D-ribulose 5-phosphate: step 2/3. The protein operates within bacterial outer membrane biogenesis; lipopolysaccharide biosynthesis. The polypeptide is 2-dehydro-3-deoxyphosphooctonate aldolase (Vesicomyosocius okutanii subsp. Calyptogena okutanii (strain HA)).